The primary structure comprises 293 residues: Protease HtpX (293 aa).

Transmembrane regions (helical) follow at residues 4 to 24 and 34 to 54; these read IALF…VLSL and GLLI…LLMS. Residue His139 participates in Zn(2+) binding. The active site involves Glu140. Residue His143 participates in Zn(2+) binding. 2 consecutive transmembrane segments (helical) span residues 158-178 and 193-213; these read VVNT…AGFL and LIYF…ASII. Glu222 contributes to the Zn(2+) binding site.

The protein belongs to the peptidase M48B family. It depends on Zn(2+) as a cofactor.

It localises to the cell inner membrane. This Salmonella agona (strain SL483) protein is Protease HtpX.